We begin with the raw amino-acid sequence, 691 residues long: POU domain, class 6, transcription factor 2 (691 aa).

Disordered regions lie at residues 1–61, 188–297, and 435–461; these read MIAG…RGNT, QQQQ…LQLV, and GQAA…SALS. The span at 17–28 shows a compositional bias: basic and acidic residues; it reads MNAELRGEDKAA. 2 stretches are compositionally biased toward low complexity: residues 188 to 197 and 206 to 216; these read QQQQQQQQQQ and QHPQPASQAPP. Positions 217–237 are enriched in pro residues; it reads QSQPTPPHQPPPASQQLPAPP. A compositionally biased stretch (low complexity) spans 238 to 272; the sequence is AQLEQATQPQQHQPHSHPQNQTQNQPSPTQQSSSP. Polar residues predominate over residues 437-447; the sequence is AATSHSPVRQA. Over residues 448–458 the composition is skewed to low complexity; the sequence is SSSSSSSSSSS. The 111-residue stretch at 476–586 folds into the POU-specific domain; that stretch reads VDGVNLEEIR…VLERWMAEAE (111 aa). The homeobox DNA-binding region spans 607-666; the sequence is KRKRRTSFTPQALEILNAHFEKNTHPSGQEMTEIAEKLNYDREVVRVWFCNKRQALKNTI. The segment at 670 to 691 is disordered; the sequence is KQHEPTSAAPLEPLADSPEENC.

This sequence belongs to the POU transcription factor family. Class-6 subfamily. As to expression, expressed in kidney, heart, muscle, spleen and ovary, but not in lung.

It is found in the nucleus. Its function is as follows. Probable transcription factor likely to be involved in early steps in the differentiation of amacrine and ganglion cells. Recognizes and binds to the DNA sequence 5'-ATGCAAAT-3'. This is POU domain, class 6, transcription factor 2 (Pou6f2) from Mus musculus (Mouse).